A 621-amino-acid chain; its full sequence is Glutamine--fructose-6-phosphate aminotransferase [isomerizing] (621 aa).

The Nucleophile; for GATase activity role is filled by cysteine 2. The region spanning 2 to 223 (CGIIGYVGEG…DRELGIISIS (222 aa)) is the Glutamine amidotransferase type-2 domain. SIS domains follow at residues 289 to 436 (LHLE…HKFT) and 470 to 611 (LSKQ…IDKP). Lysine 616 (for Fru-6P isomerization activity) is an active-site residue.

In terms of assembly, homodimer.

The protein resides in the plastid. Its subcellular location is the chloroplast. The enzyme catalyses D-fructose 6-phosphate + L-glutamine = D-glucosamine 6-phosphate + L-glutamate. Functionally, catalyzes the first step in hexosamine metabolism, converting fructose-6P into glucosamine-6P using glutamine as a nitrogen source. The polypeptide is Glutamine--fructose-6-phosphate aminotransferase [isomerizing] (Cyanidium caldarium (Red alga)).